A 215-amino-acid chain; its full sequence is Ankyrin repeat domain-containing protein 49 (215 aa).

ANK repeat units lie at residues 81-110 (DGYTPLHRAAYNNFVDMAKLLLQYHANPNA) and 114-143 (LGWTPLHSACKWNNADCAHLLLQFGADVNA).

In terms of assembly, interacts with Bdbt; interaction promotes the stability of both complex members.

Its subcellular location is the cytoplasm. It is found in the cytosol. The protein localises to the cell membrane. In terms of biological role, required for regulating the establishment of planar cell polarity in the wing. Forms a complex with Bdbt which likely functions in the regulation of planar polarity by promoting the activity of Dco during planar polarity establishment. Within the complex, probably functions to stabilize Bdbt, while Bdbt directly promotes Dco activity in regulating phosphorylation of core proteins such as dsh, and asymmetric localization. This is Ankyrin repeat domain-containing protein 49 from Drosophila melanogaster (Fruit fly).